A 148-amino-acid chain; its full sequence is Small ribosomal subunit protein bS6 (148 aa).

Positions His96 to Ala148 are disordered.

It belongs to the bacterial ribosomal protein bS6 family.

Binds together with bS18 to 16S ribosomal RNA. In Brucella abortus biovar 1 (strain 9-941), this protein is Small ribosomal subunit protein bS6.